We begin with the raw amino-acid sequence, 152 residues long: Protein PLANT CADMIUM RESISTANCE 2 (152 aa).

Residues 57–79 (TAGALYALIAVVTGCACIYSCFY) traverse the membrane as a helical segment.

This sequence belongs to the cornifelin family. As to quaternary structure, homooligomer. As to expression, expressed in roots, leaves, shoots, stems, flowers and siliques. In leaves, restricted mainly to the vascular tissue. Expressed in all cells in the root tip, in the vascular tissue and the epidermis in the elongation zone, and only in the epidermal cells in the root hair zone.

The protein localises to the cell membrane. Functionally, zinc transporter acting in both zinc extrusion and long-distance zinc transport. Involved in the loading of zinc into the xyleme and in the detoxification of excess zinc at the epidermal cells. Acts independently from the zinc transporters HMA2 and HMA4. May be also involved in cadmium resistance. The polypeptide is Protein PLANT CADMIUM RESISTANCE 2 (PCR2) (Arabidopsis thaliana (Mouse-ear cress)).